The following is a 503-amino-acid chain: uncharacterized protein (503 aa).

Disordered regions lie at residues 1 to 26 and 132 to 156; these read MADDEDDIVWIREDTAQSSVPTSPTT and DQQQNDQLSAKLDPKTPNSVDDNSM. Residues 16–26 show a composition bias toward low complexity; that stretch reads AQSSVPTSPTT. Residues 147–156 are compositionally biased toward polar residues; it reads TPNSVDDNSM.

This is an uncharacterized protein from Caenorhabditis elegans.